Here is an 88-residue protein sequence, read N- to C-terminus: HssA/B-like protein 17 (88 aa).

It belongs to the hssA/B family.

This Dictyostelium discoideum (Social amoeba) protein is HssA/B-like protein 17 (hssl17).